Reading from the N-terminus, the 476-residue chain is Calcium uptake protein 1, mitochondrial (476 aa).

The N-terminal 33 residues, 1–33, are a transit peptide targeting the mitochondrion; sequence MFRLNSLSALAELAVGSRWYHGGSQPIQIRRRL. A disordered region spans residues 68–106; it reads SDIGDKGKNKDEGDVCNHEKKTADLAPHPEEKKKKRSGF. The interval 99–110 is polybasic region; sequence KKKKRSGFRDRK. S122 is modified (phosphoserine). A k/R-ring region spans residues 126-129; the sequence is KIFR. The 36-residue stretch at 218 to 253 folds into the EF-hand 1 domain; it reads TPQRNFEIAFKMFDLNGDGEVDMEEFEQVQSIIRSQ. Ca(2+) is bound by residues D231, N233, D235, E237, and E242. The tract at residues 259 to 263 is k/R-ring; that stretch reads RHRDR. Residues 408 to 443 form the EF-hand 2 domain; the sequence is LSDHVCDVVFALFDCDGNGELSNKEFVSIMKQRLMR. Ca(2+) is bound by residues D421, D423, N425, E427, and E432. R455 bears the Asymmetric dimethylarginine mark. The C-helix region stretch occupies residues 455-465; it reads RLMQAMWKCAQ.

Belongs to the MICU1 family. MICU1 subfamily. As to quaternary structure, heterodimer; disulfide-linked; heterodimerizes with MICU2 or MICU3. Homodimer; disulfide-linked. Component of the uniplex complex, composed of MCU, EMRE/SMDT1, MICU1 and MICU2 (or MICU3) in a 4:4:1:1 stoichiometry. The composition of calcium sensors within the uniplex complex can differ depending on tissues: a MICU1 homodimer can be present instead of the MICU1-MICU2 heterodimer in skeletal-muscle and kidney. MICU1 is recruited to the uniplex complex by EMRE/SMDT1, and it associates with MCU at low calcium levels, occluding the pore of the MCU channel. Associates with the MICOS complex. Interacts with SLC25A23. Interacts with CHCHD4/MIA40; which introduces the interchain disulfide bond with MICU2. Interacts (when methylated) with UCP2; leading to decrease the calcium sensitivity of MICU1. In terms of processing, phosphorylation at Ser-122 by AKT1 impairs its maturation and stability. Asymmetric dimethylation at Arg-455 by PRMT1 decreases the calcium sensitivity of MICU1 by promoting interaction with UCP2. Post-translationally, degraded by YME1L1 when not complexed as homodimer or heterodimer. Not degraded when complexed as homodimer or heterodimer; the presence of the interchain disulfide bond protecting MICU1 from degradation by YME1L1. As to expression, expressed in epithelial cell lines. Strongly expressed in epidermal keratinocytes and dermal endothelial cells.

It is found in the mitochondrion intermembrane space. The protein resides in the mitochondrion inner membrane. Activated by spermine, kaempferol and SB202190, which bind MICU1 and prevent MCU pore occlusion in absence of calcium. Its function is as follows. Calcium sensor of the mitochondrial calcium uniporter (MCU) channel, which senses calcium level via its EF-hand domains. MICU1 and MICU2 (or MICU3) form a disulfide-linked heterodimer that stimulates and inhibits MCU activity, depending on the concentration of calcium. At low calcium levels, MICU1 occludes the pore of the MCU channel, preventing mitochondrial calcium uptake. At higher calcium levels, calcium-binding to MICU1 and MICU2 (or MICU3) induces a conformational change that weakens MCU-MICU1 interactions and moves the MICU1-MICU2 heterodimer away from the pore, allowing calcium permeation through the MCU channel. Also required to protect against manganese toxicity by preventing manganese uptake by MCU: mechanistically, manganese-binding to its EF-hand domains does not induce any conformational change, maintaining MCU pore occlusion. Also acts as a barrier for inhibitors of the MCU channel, such as ruthenium red or its derivative Ru360. Acts as a regulator of mitochondrial cristae structure independently of its ability to regulate the mitochondrial calcium uniporter channel. Regulates glucose-dependent insulin secretion in pancreatic beta-cells by regulating mitochondrial calcium uptake. Induces T-helper 1-mediated autoreactivity, which is accompanied by the release of IFNG. In terms of biological role, isoform that regulates mitochondrial calcium uniporter (MCU) in the skeletal muscle. Compared to other isoforms, this isoform has higher affinity for calcium, promoting mitochondrial calcium uptake at lower calcium concentrations. This allows a rapid response of mitochondrial metabolism and ensures sustained ATP production needed for resistance and strenuous exercise. The polypeptide is Calcium uptake protein 1, mitochondrial (Homo sapiens (Human)).